The following is a 526-amino-acid chain: Glutamate--tRNA ligase, mitochondrial (526 aa).

A mitochondrion-targeting transit peptide spans 1–38; that stretch reads MLSYTSCAKLICSRYIVSKISFYSLKRCNSTAVVRTRF. Residue 37 to 39 coordinates L-glutamate; it reads RFA. Positions 42-50 match the 'HIGH' region motif; sequence PTGFLHLGS. Histidine 47 is a binding site for ATP. L-glutamate is bound by residues glutamate 73, 222 to 226, and arginine 240; that span reads YHFAN. ATP is bound by residues glutamate 243 and 278–282; that span reads KLSKR. The 'KMSKS' region signature appears at 278-282; that stretch reads KLSKR.

This sequence belongs to the class-I aminoacyl-tRNA synthetase family. Glutamate--tRNA ligase type 1 subfamily.

The protein resides in the mitochondrion. It carries out the reaction tRNA(Glu) + L-glutamate + ATP = L-glutamyl-tRNA(Glu) + AMP + diphosphate. Its function is as follows. Catalyzes the attachment of glutamate to tRNA(Glu) in a two-step reaction: glutamate is first activated by ATP to form Glu-AMP and then transferred to the acceptor end of tRNA(Glu). The polypeptide is Glutamate--tRNA ligase, mitochondrial (mse1) (Schizosaccharomyces pombe (strain 972 / ATCC 24843) (Fission yeast)).